Consider the following 429-residue polypeptide: Histidine--tRNA ligase (429 aa).

It belongs to the class-II aminoacyl-tRNA synthetase family. Homodimer.

It localises to the cytoplasm. It carries out the reaction tRNA(His) + L-histidine + ATP = L-histidyl-tRNA(His) + AMP + diphosphate + H(+). This Pelodictyon phaeoclathratiforme (strain DSM 5477 / BU-1) protein is Histidine--tRNA ligase.